A 205-amino-acid polypeptide reads, in one-letter code: Inactive ribonuclease-like protein 9 (205 aa).

An N-terminal signal peptide occupies residues 1–26 (MMRTLITTHPLPLLLLPQQLLQPVQF). 3 disulfides stabilise this stretch: cysteine 98–cysteine 153, cysteine 116–cysteine 168, and cysteine 123–cysteine 130. Residues asparagine 131 and asparagine 143 are each glycosylated (N-linked (GlcNAc...) asparagine).

It belongs to the pancreatic ribonuclease family.

Its subcellular location is the secreted. In terms of biological role, does not exhibit any ribonuclease activity. The protein is Inactive ribonuclease-like protein 9 (RNASE9) of Pan troglodytes (Chimpanzee).